Consider the following 77-residue polypeptide: uncharacterized protein (77 aa).

This is an uncharacterized protein from Xylella fastidiosa (strain 9a5c).